We begin with the raw amino-acid sequence, 245 residues long: 1-(5-phosphoribosyl)-5-[(5-phosphoribosylamino)methylideneamino] imidazole-4-carboxamide isomerase (245 aa).

Asp-7 acts as the Proton acceptor in catalysis. The Proton donor role is filled by Asp-129.

It belongs to the HisA/HisF family.

Its subcellular location is the cytoplasm. The catalysed reaction is 1-(5-phospho-beta-D-ribosyl)-5-[(5-phospho-beta-D-ribosylamino)methylideneamino]imidazole-4-carboxamide = 5-[(5-phospho-1-deoxy-D-ribulos-1-ylimino)methylamino]-1-(5-phospho-beta-D-ribosyl)imidazole-4-carboxamide. The protein operates within amino-acid biosynthesis; L-histidine biosynthesis; L-histidine from 5-phospho-alpha-D-ribose 1-diphosphate: step 4/9. This chain is 1-(5-phosphoribosyl)-5-[(5-phosphoribosylamino)methylideneamino] imidazole-4-carboxamide isomerase, found in Shigella flexneri serotype 5b (strain 8401).